The following is a 499-amino-acid chain: Lysine--tRNA ligase (499 aa).

Mg(2+) is bound by residues Glu-408 and Glu-415.

Belongs to the class-II aminoacyl-tRNA synthetase family. In terms of assembly, homodimer. It depends on Mg(2+) as a cofactor.

It localises to the cytoplasm. It catalyses the reaction tRNA(Lys) + L-lysine + ATP = L-lysyl-tRNA(Lys) + AMP + diphosphate. This Thermoanaerobacter pseudethanolicus (strain ATCC 33223 / 39E) (Clostridium thermohydrosulfuricum) protein is Lysine--tRNA ligase.